The chain runs to 256 residues: ATP synthase peripheral stalk subunit b, mitochondrial (256 aa).

The transit peptide at 1 to 42 (MLSRVVLSAAATAAPSLKNAAFLGPGVLQATRTFHTGQPHLV) directs the protein to the mitochondrion. An N6-succinyllysine modification is found at K131. N6-acetyllysine is present on residues K139, K154, K162, K221, K233, and K244.

This sequence belongs to the eukaryotic ATPase B chain family. As to quaternary structure, component of the ATP synthase complex composed at least of ATP5F1A/subunit alpha, ATP5F1B/subunit beta, ATP5MC1/subunit c (homooctomer), MT-ATP6/subunit a, MT-ATP8/subunit 8, ATP5ME/subunit e, ATP5MF/subunit f, ATP5MG/subunit g, ATP5MK/subunit k, ATP5MJ/subunit j, ATP5F1C/subunit gamma, ATP5F1D/subunit delta, ATP5F1E/subunit epsilon, ATP5PF/subunit F6, ATP5PB/subunit b, ATP5PD/subunit d, ATP5PO/subunit OSCP. ATP synthase complex consists of a soluble F(1) head domain (subunits alpha(3) and beta(3)) - the catalytic core - and a membrane F(0) domain - the membrane proton channel (subunits c, a, 8, e, f, g, k and j). These two domains are linked by a central stalk (subunits gamma, delta, and epsilon) rotating inside the F1 region and a stationary peripheral stalk (subunits F6, b, d, and OSCP).

Its subcellular location is the mitochondrion. The protein localises to the mitochondrion inner membrane. Functionally, subunit b, of the mitochondrial membrane ATP synthase complex (F(1)F(0) ATP synthase or Complex V) that produces ATP from ADP in the presence of a proton gradient across the membrane which is generated by electron transport complexes of the respiratory chain. ATP synthase complex consist of a soluble F(1) head domain - the catalytic core - and a membrane F(1) domain - the membrane proton channel. These two domains are linked by a central stalk rotating inside the F(1) region and a stationary peripheral stalk. During catalysis, ATP synthesis in the catalytic domain of F(1) is coupled via a rotary mechanism of the central stalk subunits to proton translocation. In vivo, can only synthesize ATP although its ATP hydrolase activity can be activated artificially in vitro. Part of the complex F(0) domain. Part of the complex F(0) domain and the peripheric stalk, which acts as a stator to hold the catalytic alpha(3)beta(3) subcomplex and subunit a/ATP6 static relative to the rotary elements. The chain is ATP synthase peripheral stalk subunit b, mitochondrial from Homo sapiens (Human).